The following is a 473-amino-acid chain: Proline--tRNA ligase (473 aa).

Belongs to the class-II aminoacyl-tRNA synthetase family. ProS type 3 subfamily. As to quaternary structure, homodimer.

The protein localises to the cytoplasm. The catalysed reaction is tRNA(Pro) + L-proline + ATP = L-prolyl-tRNA(Pro) + AMP + diphosphate. In terms of biological role, catalyzes the attachment of proline to tRNA(Pro) in a two-step reaction: proline is first activated by ATP to form Pro-AMP and then transferred to the acceptor end of tRNA(Pro). This is Proline--tRNA ligase from Mesoplasma florum (strain ATCC 33453 / NBRC 100688 / NCTC 11704 / L1) (Acholeplasma florum).